The chain runs to 287 residues: Probable phosphite transport system-binding protein PtxB (287 aa).

Positions Met-1–Ala-23 are cleaved as a signal peptide.

It belongs to the phosphate/phosphite/phosphonate binding protein family.

Functionally, probably forms part of a binding-protein-dependent phosphite transporter. Required for oxidation of phosphite to phosphate. In Stutzerimonas stutzeri (Pseudomonas stutzeri), this protein is Probable phosphite transport system-binding protein PtxB (ptxB).